We begin with the raw amino-acid sequence, 477 residues long: Cysteine--tRNA ligase (477 aa).

Residue C29 coordinates Zn(2+). A 'HIGH' region motif is present at residues 31–41; sequence PTVQASPHIGH. Zn(2+) is bound by residues C219, H244, and E248. The short motif at 275 to 279 is the 'KMSKS' region element; that stretch reads KMSKS. K278 is a binding site for ATP.

This sequence belongs to the class-I aminoacyl-tRNA synthetase family. In terms of assembly, monomer. It depends on Zn(2+) as a cofactor.

It is found in the cytoplasm. The enzyme catalyses tRNA(Cys) + L-cysteine + ATP = L-cysteinyl-tRNA(Cys) + AMP + diphosphate. The protein is Cysteine--tRNA ligase of Leifsonia xyli subsp. xyli (strain CTCB07).